A 360-amino-acid chain; its full sequence is Phospho-N-acetylmuramoyl-pentapeptide-transferase (360 aa).

A run of 10 helical transmembrane segments spans residues 25–45, 73–93, 97–117, 132–152, 168–188, 199–219, 236–256, 263–283, 288–308, and 338–358; these read RGIL…PWMI, TMGG…WADL, YVWV…VDDY, WKYF…YMTA, VSIP…VGSS, GLAI…CYLS, AGEL…FLWF, VFMG…IAVI, IVLF…VIQV, and VIVR…ATLK.

It belongs to the glycosyltransferase 4 family. MraY subfamily. Requires Mg(2+) as cofactor.

It localises to the cell inner membrane. The enzyme catalyses UDP-N-acetyl-alpha-D-muramoyl-L-alanyl-gamma-D-glutamyl-meso-2,6-diaminopimeloyl-D-alanyl-D-alanine + di-trans,octa-cis-undecaprenyl phosphate = di-trans,octa-cis-undecaprenyl diphospho-N-acetyl-alpha-D-muramoyl-L-alanyl-D-glutamyl-meso-2,6-diaminopimeloyl-D-alanyl-D-alanine + UMP. Its pathway is cell wall biogenesis; peptidoglycan biosynthesis. Its function is as follows. Catalyzes the initial step of the lipid cycle reactions in the biosynthesis of the cell wall peptidoglycan: transfers peptidoglycan precursor phospho-MurNAc-pentapeptide from UDP-MurNAc-pentapeptide onto the lipid carrier undecaprenyl phosphate, yielding undecaprenyl-pyrophosphoryl-MurNAc-pentapeptide, known as lipid I. The polypeptide is Phospho-N-acetylmuramoyl-pentapeptide-transferase (Pseudomonas fluorescens (strain ATCC BAA-477 / NRRL B-23932 / Pf-5)).